The sequence spans 156 residues: uncharacterized protein (156 aa).

Residues 1–12 (MSSRFARSNGNP) are compositionally biased toward polar residues. The segment at 1–27 (MSSRFARSNGNPNHIRKRNHSPDPIGI) is disordered. Position 21 is a phosphoserine (S21).

The protein localises to the cytoplasm. Its subcellular location is the nucleus. This is an uncharacterized protein from Saccharomyces cerevisiae (strain ATCC 204508 / S288c) (Baker's yeast).